An 83-amino-acid polypeptide reads, in one-letter code: Exodeoxyribonuclease 7 small subunit (83 aa).

It belongs to the XseB family. Heterooligomer composed of large and small subunits.

It localises to the cytoplasm. It carries out the reaction Exonucleolytic cleavage in either 5'- to 3'- or 3'- to 5'-direction to yield nucleoside 5'-phosphates.. Bidirectionally degrades single-stranded DNA into large acid-insoluble oligonucleotides, which are then degraded further into small acid-soluble oligonucleotides. This is Exodeoxyribonuclease 7 small subunit from Moorella thermoacetica (strain ATCC 39073 / JCM 9320).